Reading from the N-terminus, the 438-residue chain is Protein DSE3 (438 aa).

The protein localises to the bud neck. Functionally, may be involved in the establishment of the daughter fate. This chain is Protein DSE3 (DSE3), found in Candida glabrata (strain ATCC 2001 / BCRC 20586 / JCM 3761 / NBRC 0622 / NRRL Y-65 / CBS 138) (Yeast).